The sequence spans 162 residues: Superoxide dismutase [Cu-Zn] (162 aa).

The first 20 residues, 1–20 (MNKSGIILIGTILFSSMAIA), serve as a signal peptide directing secretion. Cu cation-binding residues include His-66, His-68, and His-83. Residues Cys-73 and Cys-158 are joined by a disulfide bond. Zn(2+)-binding residues include His-83, His-92, His-100, and Asp-103. Residue His-137 coordinates Cu cation.

Belongs to the Cu-Zn superoxide dismutase family. Homodimer. Cu cation serves as cofactor. The cofactor is Zn(2+).

The protein localises to the periplasm. The catalysed reaction is 2 superoxide + 2 H(+) = H2O2 + O2. In terms of biological role, destroys radicals which are normally produced within the cells and which are toxic to biological systems. The polypeptide is Superoxide dismutase [Cu-Zn] (sodC) (Legionella pneumophila).